The following is a 220-amino-acid chain: Deep-sea actinoporin Cjtox I (220 aa).

A signal peptide spans 1–19; the sequence is MNRLIILCLVAATIYSTIA. Residues 20–42 constitute a propeptide that is removed on maturation; it reads LPMKEDISNEERPTSVNEKPVKK. Phosphocholine contacts are provided by Ser96, Val128, Ser146, Pro148, Tyr174, Tyr178, and Tyr179. The interval 146–161 is trp-rich region, which is important for the binding to lipid membrane; the sequence is SVPYDYNWYSNWWNIK. The Cell attachment site, crucial for protein stability motif lies at 185 to 187; the sequence is KGN.

The protein belongs to the actinoporin family. Sea anemone subfamily. In terms of assembly, octamer or nonamer in membranes. Monomer in the soluble state. Expressed in tentacles.

The protein resides in the secreted. The protein localises to the nematocyst. It is found in the target cell membrane. Its function is as follows. Probably acts in predation. Pore-forming protein that forms cations-selective hydrophilic pores of around 1 nm and causes cytolysis. Pore formation is a multi-step process that involves specific recognition of membrane sphingomyelin (but neither cholesterol nor phosphatidylcholine) using aromatic rich region and adjacent phosphocholine (POC) binding site, firm binding to the membrane (mainly driven by hydrophobic interactions) accompanied by the transfer of the N-terminal region to the lipid-water interface and finally pore formation after oligomerization of monomers. Shows hemolytic activity on equine erythrocytes. Hemolysis is moderately inhibited in presence of sphingomyelin, suggesting that this protein targets sphingomyelin. The sequence is that of Deep-sea actinoporin Cjtox I from Cribrinopsis japonica (Deep-sea anemone).